The primary structure comprises 25 residues: Caerin-1.4 (25 aa).

Position 25 is a leucine amide (leucine 25).

It belongs to the frog skin active peptide (FSAP) family. Caerin subfamily. In terms of tissue distribution, expressed by the skin parotoid and/or rostral glands.

It is found in the secreted. In terms of biological role, antibacterial peptide, that adopts an alpha helical conformation which can disrupt bacterial membranes. Each caerin displays a different antimicrobial specificity. This is Caerin-1.4 from Ranoidea caerulea (Green tree frog).